The primary structure comprises 434 residues: Methylenetetrahydrofolate--tRNA-(uracil-5-)-methyltransferase TrmFO (434 aa).

10–15 is an FAD binding site; that stretch reads GAGLAG.

It belongs to the MnmG family. TrmFO subfamily. The cofactor is FAD.

The protein resides in the cytoplasm. The enzyme catalyses uridine(54) in tRNA + (6R)-5,10-methylene-5,6,7,8-tetrahydrofolate + NADH + H(+) = 5-methyluridine(54) in tRNA + (6S)-5,6,7,8-tetrahydrofolate + NAD(+). It carries out the reaction uridine(54) in tRNA + (6R)-5,10-methylene-5,6,7,8-tetrahydrofolate + NADPH + H(+) = 5-methyluridine(54) in tRNA + (6S)-5,6,7,8-tetrahydrofolate + NADP(+). Functionally, catalyzes the folate-dependent formation of 5-methyl-uridine at position 54 (M-5-U54) in all tRNAs. This is Methylenetetrahydrofolate--tRNA-(uracil-5-)-methyltransferase TrmFO from Bacillus mycoides (strain KBAB4) (Bacillus weihenstephanensis).